A 209-amino-acid chain; its full sequence is Uracil phosphoribosyltransferase (209 aa).

Residues R79, R104, and 131–139 (DPMLATGGS) each bind 5-phospho-alpha-D-ribose 1-diphosphate. Uracil is bound by residues I194 and 199–201 (GDA). Position 200 (D200) interacts with 5-phospho-alpha-D-ribose 1-diphosphate.

This sequence belongs to the UPRTase family. It depends on Mg(2+) as a cofactor.

The enzyme catalyses UMP + diphosphate = 5-phospho-alpha-D-ribose 1-diphosphate + uracil. It participates in pyrimidine metabolism; UMP biosynthesis via salvage pathway; UMP from uracil: step 1/1. Allosterically activated by GTP. In terms of biological role, catalyzes the conversion of uracil and 5-phospho-alpha-D-ribose 1-diphosphate (PRPP) to UMP and diphosphate. In Alkaliphilus metalliredigens (strain QYMF), this protein is Uracil phosphoribosyltransferase.